Reading from the N-terminus, the 517-residue chain is Maturase K (517 aa).

Belongs to the intron maturase 2 family. MatK subfamily.

It is found in the plastid. The protein localises to the chloroplast. Its function is as follows. Usually encoded in the trnK tRNA gene intron. Probably assists in splicing its own and other chloroplast group II introns. In Trillium grandiflorum (Large-flowered trillium), this protein is Maturase K.